Reading from the N-terminus, the 286-residue chain is NAD kinase (286 aa).

The Proton acceptor role is filled by Asp66. NAD(+) is bound by residues 66 to 67 (DG), 137 to 138 (ND), Arg148, Arg165, Asp167, and 178 to 183 (TAYSMS).

The protein belongs to the NAD kinase family. A divalent metal cation is required as a cofactor.

The protein resides in the cytoplasm. It catalyses the reaction NAD(+) + ATP = ADP + NADP(+) + H(+). In terms of biological role, involved in the regulation of the intracellular balance of NAD and NADP, and is a key enzyme in the biosynthesis of NADP. Catalyzes specifically the phosphorylation on 2'-hydroxyl of the adenosine moiety of NAD to yield NADP. In Chlorobium chlorochromatii (strain CaD3), this protein is NAD kinase.